A 92-amino-acid chain; its full sequence is Small ribosomal subunit protein uS19 (92 aa).

This sequence belongs to the universal ribosomal protein uS19 family.

Its function is as follows. Protein S19 forms a complex with S13 that binds strongly to the 16S ribosomal RNA. The sequence is that of Small ribosomal subunit protein uS19 from Vibrio parahaemolyticus serotype O3:K6 (strain RIMD 2210633).